A 424-amino-acid chain; its full sequence is Histidine--tRNA ligase (424 aa).

The protein belongs to the class-II aminoacyl-tRNA synthetase family. Homodimer.

The protein localises to the cytoplasm. The catalysed reaction is tRNA(His) + L-histidine + ATP = L-histidyl-tRNA(His) + AMP + diphosphate + H(+). The sequence is that of Histidine--tRNA ligase from Marinomonas sp. (strain MWYL1).